Here is a 198-residue protein sequence, read N- to C-terminus: Ribosome maturation factor RimP (198 aa).

The protein belongs to the RimP family.

It localises to the cytoplasm. Its function is as follows. Required for maturation of 30S ribosomal subunits. This chain is Ribosome maturation factor RimP, found in Rhizobium etli (strain ATCC 51251 / DSM 11541 / JCM 21823 / NBRC 15573 / CFN 42).